Here is a 311-residue protein sequence, read N- to C-terminus: tRNA dimethylallyltransferase (311 aa).

11–18 (GPTAVGKT) is a binding site for ATP. Substrate is bound at residue 13–18 (TAVGKT). Residues 36–39 (DSVQ) form an interaction with substrate tRNA region.

It belongs to the IPP transferase family. In terms of assembly, monomer. Mg(2+) serves as cofactor.

The enzyme catalyses adenosine(37) in tRNA + dimethylallyl diphosphate = N(6)-dimethylallyladenosine(37) in tRNA + diphosphate. Its function is as follows. Catalyzes the transfer of a dimethylallyl group onto the adenine at position 37 in tRNAs that read codons beginning with uridine, leading to the formation of N6-(dimethylallyl)adenosine (i(6)A). The polypeptide is tRNA dimethylallyltransferase (Exiguobacterium sp. (strain ATCC BAA-1283 / AT1b)).